The primary structure comprises 81 residues: Photosystem I iron-sulfur center (81 aa).

4Fe-4S ferredoxin-type domains are found at residues 2–31 (AHSV…MIPW) and 39–68 (IASA…VRVY). 8 residues coordinate [4Fe-4S] cluster: Cys-11, Cys-14, Cys-17, Cys-21, Cys-48, Cys-51, Cys-54, and Cys-58.

As to quaternary structure, the eukaryotic PSI reaction center is composed of at least 11 subunits. [4Fe-4S] cluster serves as cofactor.

The protein resides in the plastid. It is found in the chloroplast thylakoid membrane. The enzyme catalyses reduced [plastocyanin] + hnu + oxidized [2Fe-2S]-[ferredoxin] = oxidized [plastocyanin] + reduced [2Fe-2S]-[ferredoxin]. Its function is as follows. Apoprotein for the two 4Fe-4S centers FA and FB of photosystem I (PSI); essential for photochemical activity. FB is the terminal electron acceptor of PSI, donating electrons to ferredoxin. The C-terminus interacts with PsaA/B/D and helps assemble the protein into the PSI complex. Required for binding of PsaD and PsaE to PSI. PSI is a plastocyanin-ferredoxin oxidoreductase, converting photonic excitation into a charge separation, which transfers an electron from the donor P700 chlorophyll pair to the spectroscopically characterized acceptors A0, A1, FX, FA and FB in turn. This is Photosystem I iron-sulfur center from Cycas taitungensis (Prince sago).